Here is a 551-residue protein sequence, read N- to C-terminus: C6 finger transcription factor imqK (551 aa).

A DNA-binding region (zn(2)-C6 fungal-type) is located at residues 11-53; sequence CDRCRGQKLRCVRLPGPAREDSPRSARSVNQPCERCKRAKVVC. Disordered stretches follow at residues 280–302 and 351–378; these read RQGMSAASDPNYPASGLGETSPS and NEYSSSRSQSRNHSTSASSRSKDGRISA. Positions 351-369 are enriched in low complexity; sequence NEYSSSRSQSRNHSTSASS.

The protein localises to the nucleus. Functionally, C6 finger transcription factor that positively regulates the cluster that mediates the biosynthesis of imizoquins A to D, tripeptide-derived alkaloids that serve a protective role against oxidative stress that are essential for normal germination. This is C6 finger transcription factor imqK from Aspergillus flavus (strain ATCC 200026 / FGSC A1120 / IAM 13836 / NRRL 3357 / JCM 12722 / SRRC 167).